A 524-amino-acid polypeptide reads, in one-letter code: Glucose-6-phosphate isomerase (524 aa).

Glu322 functions as the Proton donor in the catalytic mechanism. Residues His351 and Lys453 contribute to the active site.

This sequence belongs to the GPI family.

It is found in the cytoplasm. It catalyses the reaction alpha-D-glucose 6-phosphate = beta-D-fructose 6-phosphate. It participates in carbohydrate biosynthesis; gluconeogenesis. Its pathway is carbohydrate degradation; glycolysis; D-glyceraldehyde 3-phosphate and glycerone phosphate from D-glucose: step 2/4. In terms of biological role, catalyzes the reversible isomerization of glucose-6-phosphate to fructose-6-phosphate. The sequence is that of Glucose-6-phosphate isomerase from Prochlorococcus marinus (strain NATL2A).